A 369-amino-acid chain; its full sequence is Iron-sulfur cluster assembly SufBD family protein AF_2365 (369 aa).

Belongs to the iron-sulfur cluster assembly SufBD family.

The polypeptide is Iron-sulfur cluster assembly SufBD family protein AF_2365 (Archaeoglobus fulgidus (strain ATCC 49558 / DSM 4304 / JCM 9628 / NBRC 100126 / VC-16)).